The chain runs to 257 residues: Tryptophan synthase alpha chain (257 aa).

Active-site proton acceptor residues include glutamate 46 and aspartate 57.

Belongs to the TrpA family. In terms of assembly, tetramer of two alpha and two beta chains.

The catalysed reaction is (1S,2R)-1-C-(indol-3-yl)glycerol 3-phosphate + L-serine = D-glyceraldehyde 3-phosphate + L-tryptophan + H2O. It participates in amino-acid biosynthesis; L-tryptophan biosynthesis; L-tryptophan from chorismate: step 5/5. Its function is as follows. The alpha subunit is responsible for the aldol cleavage of indoleglycerol phosphate to indole and glyceraldehyde 3-phosphate. The polypeptide is Tryptophan synthase alpha chain (Parabacteroides distasonis (strain ATCC 8503 / DSM 20701 / CIP 104284 / JCM 5825 / NCTC 11152)).